The following is a 320-amino-acid chain: Probable L-ascorbate peroxidase 5, chloroplastic (320 aa).

The transit peptide at 1–42 (MAVVHRILRRGLSAASPLPSLRGLLLVSPQELGRRPASSSSS) directs the protein to the chloroplast. Residue His-80 is the Proton acceptor of the active site. Residue His-209 participates in heme b binding. Thr-210 is a K(+) binding site. The disordered stretch occupies residues 213–241 (RARPERSGWGKPETKYTENGPGAPGGQSW). The segment covering 214 to 228 (ARPERSGWGKPETKY) has biased composition (basic and acidic residues). Positions 242 and 249 each coordinate K(+).

It belongs to the peroxidase family. Ascorbate peroxidase subfamily. Heme b is required as a cofactor. In terms of tissue distribution, expressed in leaves, stems and flowers.

It localises to the plastid. Its subcellular location is the chloroplast stroma. The catalysed reaction is L-ascorbate + H2O2 = L-dehydroascorbate + 2 H2O. In terms of biological role, plays a key role in hydrogen peroxide removal. This chain is Probable L-ascorbate peroxidase 5, chloroplastic, found in Oryza sativa subsp. japonica (Rice).